The sequence spans 320 residues: Aspartate carbamoyltransferase catalytic subunit (320 aa).

Carbamoyl phosphate-binding residues include arginine 57 and threonine 58. Lysine 85 lines the L-aspartate pocket. 3 residues coordinate carbamoyl phosphate: arginine 107, histidine 141, and glutamine 144. L-aspartate-binding residues include arginine 174 and arginine 228. Residues glycine 269 and proline 270 each coordinate carbamoyl phosphate.

The protein belongs to the aspartate/ornithine carbamoyltransferase superfamily. ATCase family. In terms of assembly, heterododecamer (2C3:3R2) of six catalytic PyrB chains organized as two trimers (C3), and six regulatory PyrI chains organized as three dimers (R2).

It carries out the reaction carbamoyl phosphate + L-aspartate = N-carbamoyl-L-aspartate + phosphate + H(+). The protein operates within pyrimidine metabolism; UMP biosynthesis via de novo pathway; (S)-dihydroorotate from bicarbonate: step 2/3. Functionally, catalyzes the condensation of carbamoyl phosphate and aspartate to form carbamoyl aspartate and inorganic phosphate, the committed step in the de novo pyrimidine nucleotide biosynthesis pathway. This is Aspartate carbamoyltransferase catalytic subunit from Mycobacterium ulcerans (strain Agy99).